The primary structure comprises 456 residues: Exodeoxyribonuclease 7 large subunit (456 aa).

This sequence belongs to the XseA family. Heterooligomer composed of large and small subunits.

It localises to the cytoplasm. It catalyses the reaction Exonucleolytic cleavage in either 5'- to 3'- or 3'- to 5'-direction to yield nucleoside 5'-phosphates.. In terms of biological role, bidirectionally degrades single-stranded DNA into large acid-insoluble oligonucleotides, which are then degraded further into small acid-soluble oligonucleotides. The protein is Exodeoxyribonuclease 7 large subunit of Azotobacter vinelandii (strain DJ / ATCC BAA-1303).